A 384-amino-acid polypeptide reads, in one-letter code: Prokineticin receptor 2 (384 aa).

Residues 1–53 (MAAQNGNASFPANFSIPQEHASSLPFNFSYDDYDLPLDEDEDMTKTQTFFAAK) lie on the Extracellular side of the membrane. N-linked (GlcNAc...) asparagine glycosylation is found at N7, N13, and N27. The helical transmembrane segment at 54–74 (IVIGVALVGIMLTCGIGNFVF) threads the bilayer. At 75-89 (ITALTRYKKLRNLTN) the chain is on the cytoplasmic side. The helical transmembrane segment at 90–110 (LLIANLAISDFLVAIICCPFE) threads the bilayer. Over 111–137 (MDYYVVHQLSWEHGHVLCACINYLRTV) the chain is Extracellular. C128 and C208 form a disulfide bridge. The helical transmembrane segment at 138 to 158 (SLYVSTNALLAIAIDRYLAIV) threads the bilayer. The Cytoplasmic segment spans residues 159–171 (HPLKPRMNYQTAS). The helical transmembrane segment at 172-192 (FLIALVWMVSILISIPSAYFT) threads the bilayer. The Extracellular portion of the chain corresponds to 193 to 223 (KETVLFIVKNQKKIFCGQVWPVDQQLYYKSY). A helical transmembrane segment spans residues 224 to 244 (FLFVFGIEFLGPVFTMTLCYA). At 245–273 (RISRELWFKAVPGFQTEQIRKRLRCRRKT) the chain is on the cytoplasmic side. The helical transmembrane segment at 274-294 (VLVLMCILTAYVLCWAPFYGF) threads the bilayer. At 295–313 (TIVRDFFPTVFVKEKHYLT) the chain is on the extracellular side. The chain crosses the membrane as a helical span at residues 314–334 (AFYVVECIAMSNSMINTVCFV). At 335 to 384 (TVKNSTMKYFKKMLLLHWRPSHHGSKSSADLDLKTSRLPATEEVDCIRLK) the chain is on the cytoplasmic side.

Belongs to the G-protein coupled receptor 1 family. In terms of assembly, homodimer.

It localises to the cell membrane. Functionally, receptor for prokineticin 2. Exclusively coupled to the G(q) subclass of heteromeric G proteins. Activation leads to mobilization of calcium, stimulation of phosphoinositide turnover and activation of p44/p42 mitogen-activated protein kinase. The protein is Prokineticin receptor 2 (PROKR2) of Bos taurus (Bovine).